Consider the following 560-residue polypeptide: NRAMP-like transporter smf-3 (560 aa).

At 1–43 the chain is on the cytoplasmic side; that stretch reads MEGEMKCPIEEIREKPEMRKAQQTYEVQVEVEDTPDTTFSWRK. Residues 44–64 form a helical membrane-spanning segment; it reads LWAFTGPGFLMSIAYLDPGNI. Residues 65 to 71 are Extracellular-facing; the sequence is ESDLQAG. The chain crosses the membrane as a helical span at residues 72–92; sequence AISYFKLIWVLLVAHIMGLLL. The Cytoplasmic portion of the chain corresponds to 93–120; sequence QRLAARLGVVSGKHMAEIAFSYYPKIPR. Residues 121–141 traverse the membrane as a helical segment; sequence LVLWMLVESAIVGSDMQEVIG. Residues 142 to 152 lie on the Extracellular side of the membrane; sequence TAISFYLLSNG. Residues 153-173 traverse the membrane as a helical segment; it reads VIPLWAGVLITICDTFTFLFL. Residues 174–182 lie on the Cytoplasmic side of the membrane; sequence EKYGVRKFE. A helical membrane pass occupies residues 183-203; it reads AFFCFLITCMAITFGYEFGVS. Residues 204–229 lie on the Extracellular side of the membrane; sequence APDAGKMFSGMFVPWCNGCDNNMVMQ. Residues 230–250 form a helical membrane-spanning segment; it reads GVAIIGAVIMPHNFYLHSALV. At 251–268 the chain is on the cytoplasmic side; it reads KSRRVDRRRAEKVTEANK. Residues 269–289 traverse the membrane as a helical segment; sequence YFFIESAFALFVSFIINTLVI. Residues 290–339 lie on the Extracellular side of the membrane; the sequence is SVFAQGMYGKTNQDIRDTCYNNTHNGMPDFYKVEFPANNDAAQSDIYHAG. Asn-310 is a glycosylation site (N-linked (GlcNAc...) asparagine). The helical transmembrane segment at 340–360 threads the bilayer; the sequence is IFLGCTFGIFALYVWAVGILA. Topologically, residues 361–390 are cytoplasmic; that stretch reads AGQSSTMTGTYAGQFAMEGFIQIKLPQWKR. A helical membrane pass occupies residues 391–411; that stretch reads ILITRSLAILPTLAVVIFSGG. Topologically, residues 412–420 are extracellular; the sequence is IDNISSLND. A glycan (N-linked (GlcNAc...) asparagine) is linked at Asn-414. The helical transmembrane segment at 421-441 threads the bilayer; it reads FLNCLQLIQLPFALIPVLTFV. The Cytoplasmic segment spans residues 442–458; sequence SDRNIMHEYKLASVSKV. A helical transmembrane segment spans residues 459–479; the sequence is VSIVISLIILFINFYFLYSWI. The Extracellular segment spans residues 480–486; the sequence is GSTFGYN. A helical membrane pass occupies residues 487–507; the sequence is AVSIPITIFCAIFYIIFIAYL. Over 508–560 the chain is Cytoplasmic; the sequence is TYYCLVAMEFISPIQTKWLAEPIYHDFDAPWLEDSENPSTKNTISDDELSMRY.

It belongs to the NRAMP family. As to expression, expressed in dopaminergic neurons (at protein level). Expressed in intestine with a weaker expression in the most proximal and distal regions. Weakly expressed in the hyp1-6, hyp7 and hyp8-12 hypodermis and in head and tail neurons.

The protein localises to the apical cell membrane. It localises to the cytoplasmic vesicle membrane. Its function is as follows. Probable divalent metal ion transporter which regulates the uptake of several heavy metals such as Mn(2+), Al(3+) and iron. Plays a role in modulating Al(3+)-induced dopamine (DA) neuron degeneration through the intracellular sequestration of Al(3+). The chain is NRAMP-like transporter smf-3 from Caenorhabditis elegans.